Here is a 251-residue protein sequence, read N- to C-terminus: Imidazole glycerol phosphate synthase subunit HisF (251 aa).

Residues Asp11 and Asp130 contribute to the active site.

Belongs to the HisA/HisF family. In terms of assembly, heterodimer of HisH and HisF.

The protein localises to the cytoplasm. The enzyme catalyses 5-[(5-phospho-1-deoxy-D-ribulos-1-ylimino)methylamino]-1-(5-phospho-beta-D-ribosyl)imidazole-4-carboxamide + L-glutamine = D-erythro-1-(imidazol-4-yl)glycerol 3-phosphate + 5-amino-1-(5-phospho-beta-D-ribosyl)imidazole-4-carboxamide + L-glutamate + H(+). Its pathway is amino-acid biosynthesis; L-histidine biosynthesis; L-histidine from 5-phospho-alpha-D-ribose 1-diphosphate: step 5/9. Its function is as follows. IGPS catalyzes the conversion of PRFAR and glutamine to IGP, AICAR and glutamate. The HisF subunit catalyzes the cyclization activity that produces IGP and AICAR from PRFAR using the ammonia provided by the HisH subunit. The protein is Imidazole glycerol phosphate synthase subunit HisF of Metallosphaera sedula (strain ATCC 51363 / DSM 5348 / JCM 9185 / NBRC 15509 / TH2).